The sequence spans 689 residues: Long-chain fatty acid transport protein 5 (689 aa).

Residues 1-29 (MGIWKKLTLLLLLLLLVGLGQPPWPAAMA) are Cytoplasmic-facing. Helical transmembrane passes span 30 to 50 (LALR…LALL) and 55 to 75 (ISSW…LFLL). Topologically, residues 76 to 689 (PLQPPPGLRW…QAVCEGTWNL (614 aa)) are cytoplasmic. An AMP-binding site is contributed by 292–303 (IFTSGTTGLPKP).

The protein belongs to the ATP-dependent AMP-binding enzyme family. As to expression, liver-specific (at protein level). In liver expressed in a periportal distribution.

The protein resides in the endoplasmic reticulum membrane. It is found in the microsome. It localises to the cell membrane. The enzyme catalyses a fatty acid(in) = a fatty acid(out). It catalyses the reaction cholate + ATP + CoA = choloyl-CoA + AMP + diphosphate. It carries out the reaction (25R)-3alpha,7alpha,12alpha-trihydroxy-5beta-cholestan-26-oate + ATP + CoA = (25R)-3alpha,7alpha,12alpha-trihydroxy-5beta-cholestan-26-oyl-CoA + AMP + diphosphate. The catalysed reaction is chenodeoxycholate + ATP + CoA = chenodeoxycholoyl-CoA + AMP + diphosphate. The enzyme catalyses deoxycholate + ATP + CoA = deoxycholoyl-CoA + AMP + diphosphate. It catalyses the reaction lithocholate + ATP + CoA = lithocholoyl-CoA + AMP + diphosphate. It carries out the reaction a very long-chain fatty acid + ATP + CoA = a very long-chain fatty acyl-CoA + AMP + diphosphate. The catalysed reaction is tetracosanoate + ATP + CoA = tetracosanoyl-CoA + AMP + diphosphate. The enzyme catalyses hexacosanoate + ATP + CoA = hexacosanoyl-CoA + AMP + diphosphate. It catalyses the reaction a long-chain fatty acid + ATP + CoA = a long-chain fatty acyl-CoA + AMP + diphosphate. It carries out the reaction octadecanoate + ATP + CoA = octadecanoyl-CoA + AMP + diphosphate. The catalysed reaction is eicosanoate + ATP + CoA = eicosanoyl-CoA + AMP + diphosphate. Its function is as follows. Mediates the import of long-chain fatty acids (LCFA) by facilitating their transport across cell membranes. Also catalyzes the ATP-dependent formation of fatty acyl-CoA using LCFA and very-long-chain fatty acids (VLCFA) as substrates. Mainly functions as a bile acyl-CoA synthetase catalyzing the activation of bile acids via ATP-dependent formation of bile acid CoA thioesters which is necessary for their subsequent conjugation with glycine or taurine. Both primary bile acids (cholic acid and chenodeoxycholic acid) and secondary bile acids (deoxycholic acid and lithocholic acid) are the principal substrates. In vitro, activates 3-alpha,7-alpha,12-alpha-trihydroxy-5-beta-cholestanate ((25R)-3alpha,7alpha,12alpha-trihydroxy-5beta-cholestan-26-oate or THCA), the C27 precursor of cholic acid deriving from the de novo synthesis from cholesterol. Plays an important role in hepatic fatty acid uptake and bile acid reconjugation and recycling but not in de novo synthesis of bile acids. This chain is Long-chain fatty acid transport protein 5 (Slc27a5), found in Mus musculus (Mouse).